The chain runs to 136 residues: Large ribosomal subunit protein uL16 (136 aa).

The protein belongs to the universal ribosomal protein uL16 family. Part of the 50S ribosomal subunit.

Binds 23S rRNA and is also seen to make contacts with the A and possibly P site tRNAs. In Shewanella sediminis (strain HAW-EB3), this protein is Large ribosomal subunit protein uL16.